Here is a 360-residue protein sequence, read N- to C-terminus: uncharacterized protein (360 aa).

An ABC transporter domain is found at 4 to 235 (LSLQHIQKIY…PANMFVAGFI (232 aa)). 37–44 (GPSGCGKS) lines the ATP pocket.

The protein belongs to the ABC transporter superfamily.

This is an uncharacterized protein from Escherichia coli O6:H1 (strain CFT073 / ATCC 700928 / UPEC).